A 568-amino-acid chain; its full sequence is Glucose-6-phosphate isomerase, cytosolic (568 aa).

Catalysis depends on E360, which acts as the Proton donor. Residues H391 and K516 contribute to the active site.

Belongs to the GPI family. Homodimer.

It localises to the cytoplasm. The enzyme catalyses alpha-D-glucose 6-phosphate = beta-D-fructose 6-phosphate. It participates in carbohydrate degradation; glycolysis; D-glyceraldehyde 3-phosphate and glycerone phosphate from D-glucose: step 2/4. This is Glucose-6-phosphate isomerase, cytosolic (PGIC) from Oenothera sinuata var. hirsuta (Mexican evening primrose).